Reading from the N-terminus, the 117-residue chain is Small ribosomal subunit protein uS8c (117 aa).

This sequence belongs to the universal ribosomal protein uS8 family. Part of the 30S ribosomal subunit.

Its subcellular location is the plastid. The protein localises to the chloroplast. In terms of biological role, one of the primary rRNA binding proteins, it binds directly to 16S rRNA central domain where it helps coordinate assembly of the platform of the 30S subunit. The chain is Small ribosomal subunit protein uS8c (rps8) from Cyanidioschyzon merolae (strain NIES-3377 / 10D) (Unicellular red alga).